We begin with the raw amino-acid sequence, 597 residues long: Fructan 1-exohydrolase w1 (597 aa).

A signal peptide spans 1–20 (MAQAWAFLLPVLVFGSYVTS). The active site involves D76. Residues N169, N237, and N249 are each glycosylated (N-linked (GlcNAc...) asparagine). A disulfide bridge connects residues C447 and C493. N-linked (GlcNAc...) asparagine glycosylation occurs at N568.

It belongs to the glycosyl hydrolase 32 family.

It catalyses the reaction Hydrolysis of terminal, non-reducing (2-&gt;1)-linked beta-D-fructofuranose residues in fructans.. Inhibited by sucrose. Functionally, hydrolyzes inulin-type beta-(2,1)-fructans and beta-(2,1)-linkages in branched fructans. Has low activity against beta-(2,6)-linked fructans. May play a role as a beta-(2,1)-trimmer during graminan biosynthesis. This chain is Fructan 1-exohydrolase w1, found in Triticum aestivum (Wheat).